We begin with the raw amino-acid sequence, 1078 residues long: Transmembrane protein 132B (1078 aa).

The Extracellular segment spans residues 1–903 (MFGAASRMDT…LTDLEIGMYA (903 aa)). 3 N-linked (GlcNAc...) asparagine glycosylation sites follow: Asn343, Asn366, and Asn381. A disordered region spans residues 834–887 (RGTPVGQEESTNKSTTPQSPMEGKNKLLKSGGPDAFTSFPTQGKSPDPNNPSDL). Polar residues predominate over residues 841-852 (EESTNKSTTPQS). The helical transmembrane segment at 904–924 (LLCVFCLAILVFLINCVAFAW) threads the bilayer. The Cytoplasmic segment spans residues 925–1078 (KYRHKRFAVS…DYMESLQDQM (154 aa)).

This sequence belongs to the TMEM132 family.

The protein resides in the membrane. The sequence is that of Transmembrane protein 132B (TMEM132B) from Homo sapiens (Human).